The primary structure comprises 326 residues: tRNA-modifying protein YgfZ (326 aa).

The folate site is built by Trp27 and Trp189.

It belongs to the tRNA-modifying YgfZ family.

It is found in the cytoplasm. Its function is as follows. Folate-binding protein involved in regulating the level of ATP-DnaA and in the modification of some tRNAs. It is probably a key factor in regulatory networks that act via tRNA modification, such as initiation of chromosomal replication. The chain is tRNA-modifying protein YgfZ from Enterobacter sp. (strain 638).